Here is a 127-residue protein sequence, read N- to C-terminus: MAQSVPPGDIQTQPGTKIVFNAPYDDKHTDHIKVINSSARRIGYGIKTTNMKRLGVDPPCGVFDPKEAVLLAVSCDAFAFGQEDTNNDRITVEWTNTPDGAAKQFRREWFQGDGMVRRKNLPIEYNP.

An N-acetylalanine modification is found at Ala-2. The 118-residue stretch at 9-126 (DIQTQPGTKI…RRKNLPIEYN (118 aa)) folds into the MSP domain.

As to expression, sperm.

Its subcellular location is the cell projection. It localises to the pseudopodium. The protein localises to the cytoplasm. It is found in the cytoskeleton. Functionally, central component in molecular interactions underlying sperm crawling. Forms an extensive filament system that extends from sperm villipoda, along the leading edge of the pseudopod. This chain is Major sperm protein 38 (msp-38), found in Caenorhabditis elegans.